A 427-amino-acid polypeptide reads, in one-letter code: Probable WRKY transcription factor 35 (427 aa).

2 disordered regions span residues methionine 1–valine 45 and tyrosine 266–phenylalanine 336. The span at serine 23–threonine 40 shows a compositional bias: pro residues. Positions serine 209–proline 275 form a DNA-binding region, WRKY. Residues serine 284–serine 310 are compositionally biased toward low complexity. Polar residues predominate over residues arginine 311–histidine 333.

The protein belongs to the WRKY group II-e family.

The protein localises to the nucleus. Functionally, transcription factor. Interacts specifically with the W box (5'-(T)TGAC[CT]-3'), a frequently occurring elicitor-responsive cis-acting element. This is Probable WRKY transcription factor 35 (WRKY35) from Arabidopsis thaliana (Mouse-ear cress).